The primary structure comprises 175 residues: Anterior gradient protein 2 homolog (175 aa).

A signal peptide spans 1–20; the sequence is MEKISVSAFLLLVALSYTLA. Positions 21 to 40 are required to promote cell adhesion; sequence RDTTVKPAAKKDTKDSRPKL. 2 consecutive short sequence motifs (homodimer stabilization; interchain) follow at residues 45 to 54 and 60 to 67; these read SRGWGDQLIW and EALYKSKT.

Belongs to the AGR family. As to quaternary structure, monomer and homodimer. Interacts with LYPD3 and DAG1 (alphaDAG1). Interacts with MUC2; disulfide-linked.

The protein localises to the secreted. The protein resides in the endoplasmic reticulum. Functionally, required for MUC2 post-transcriptional synthesis and secretion. May play a role in the production of mucus by intestinal cells. Proto-oncogene that may play a role in cell migration, cell differentiation and cell growth. Promotes cell adhesion. This chain is Anterior gradient protein 2 homolog (AGR2), found in Pongo abelii (Sumatran orangutan).